A 327-amino-acid chain; its full sequence is Deoxynucleotidyltransferase terminal-interacting protein 1 (327 aa).

Positions 1–11 (MGATGDTGGPR) are enriched in gly residues. 2 disordered regions span residues 1–34 (MGAT…PVLT) and 146–172 (KRGR…LPGH). An important for dimerization region spans residues 55 to 146 (MTTSFTDPAI…RLAHELPGIK (92 aa)). Basic and acidic residues predominate over residues 146 to 161 (KRGRQAEEESHREAPF). Positions 157-171 (REAPFPKRGKVGLPG) form a DNA-binding region, a.T hook. A Nuclear localization signal motif is present at residues 162–168 (PKRGKVG). An important for DNA and nucleosome binding region spans residues 195 to 314 (REGPKWDPAR…MRKYMETLRT (120 aa)). Residues 214-235 (GSRANKALGMGGTRGRIYIKHP) constitute a DNA-binding region (H-T-H motif).

As to quaternary structure, monomer and homodimer. A minor proportion may form homotrimers. Interacts with ZNF541. Interacts with the terminal deoxynucleotidyltransferase DNTT. Interacts with TRERF1. Identified in a histone deacetylase complex that contains DNTTIP1, HDAC1 and MIDEAS; this complex assembles into a tetramer that contains four copies of each protein chain. Component of a histone deacetylase complex containing DNTTIP1, ZNF541, HDAC1 and HDAC2. Identified in a complex with KCTD19, HDAC1, HDAC2 and ZNF541. Expressed in thymus, bone marrow and spleen.

The protein resides in the nucleus. In terms of biological role, increases DNTT terminal deoxynucleotidyltransferase activity (in vitro). Also acts as a transcriptional regulator, binding to the consensus sequence 5'-GNTGCATG-3' following an AT-tract. Associates with RAB20 promoter and positively regulates its transcription. Binds DNA and nucleosomes; may recruit HDAC1 complexes to nucleosomes or naked DNA. The protein is Deoxynucleotidyltransferase terminal-interacting protein 1 (Dnttip1) of Rattus norvegicus (Rat).